Here is a 272-residue protein sequence, read N- to C-terminus: Acetylglutamate kinase (272 aa).

Substrate is bound by residues glycine 41 to glycine 42, arginine 63, and asparagine 166.

This sequence belongs to the acetylglutamate kinase family. ArgB subfamily.

The protein resides in the cytoplasm. The enzyme catalyses N-acetyl-L-glutamate + ATP = N-acetyl-L-glutamyl 5-phosphate + ADP. It functions in the pathway amino-acid biosynthesis; L-arginine biosynthesis; N(2)-acetyl-L-ornithine from L-glutamate: step 2/4. Catalyzes the ATP-dependent phosphorylation of N-acetyl-L-glutamate. The polypeptide is Acetylglutamate kinase (Anaeromyxobacter sp. (strain K)).